We begin with the raw amino-acid sequence, 155 residues long: MAVKIKLTRLGKIRNPQYRIQVADARTRREGRAIEVIGRYHPKEEPSLIEIDSERAQYWLSVGAQPTDPVLALLKITGDWQKFKGLPGAEGTLKVKEPKPSKLDLFNAALAEADGAPTGEAIQQKKKKAPKKAEAAEAEAPAEEPAAESADAASE.

Residues 113 to 155 (ADGAPTGEAIQQKKKKAPKKAEAAEAEAPAEEPAAESADAASE) form a disordered region. Residues 136–146 (AEAEAPAEEPA) are compositionally biased toward acidic residues.

Belongs to the bacterial ribosomal protein bS16 family.

This is Small ribosomal subunit protein bS16 from Mycobacteroides abscessus (strain ATCC 19977 / DSM 44196 / CCUG 20993 / CIP 104536 / JCM 13569 / NCTC 13031 / TMC 1543 / L948) (Mycobacterium abscessus).